The following is a 204-amino-acid chain: Partner of Y14 and mago (204 aa).

Disordered stretches follow at residues 1 to 27 and 52 to 142; these read MSTY…RKAR and QRQA…LDAP. Residues 68–90 are compositionally biased toward basic and acidic residues; the sequence is ESKKEREKQERTRAKKQEKESGR. The span at 120-130 shows a compositional bias: polar residues; that stretch reads PSGSRDINSIS. Residues 149-181 adopt a coiled-coil conformation; the sequence is AKQLKKLRKKIREIEQIESRIQAGEQKKLDKDQ.

This sequence belongs to the pym family. Interacts (via N-terminus) with mago and tsu/Y14; the interaction is direct.

The protein localises to the cytoplasm. The protein resides in the nucleus. Regulator of the exon junction complex (EJC), a multiprotein complex that associates immediately upstream of the exon-exon junction on mRNAs and serves as a positional landmarks for the intron exon structure of genes and directs post-transcriptional processes in the cytoplasm such as mRNA export, nonsense-mediated mRNA decay (NMD) or translation. The sequence is that of Partner of Y14 and mago from Drosophila simulans (Fruit fly).